The sequence spans 129 residues: Dynein 14 kDa light chain, flagellar outer arm (129 aa).

One can recognise a Thioredoxin domain in the interval 2-109 (AFITEIANEA…LNRIVTELSG (108 aa)). Cys-34 and Cys-37 are oxidised to a cystine. The disordered stretch occupies residues 107–129 (LSGKNPPPAAPAAAPAAPAAEAS). Residues 117 to 129 (PAAAPAAPAAEAS) show a composition bias toward low complexity.

As to quaternary structure, consists of at least 3 heavy chains (alpha, beta and gamma), 2 intermediate chains and 8 light chains.

It localises to the cell projection. The protein localises to the cilium. Its subcellular location is the flagellum. The protein resides in the cytoplasm. It is found in the cytoskeleton. It localises to the flagellum axoneme. In terms of biological role, may be involved in regulating the redox state of functionally important thiol groups within dynein. The sequence is that of Dynein 14 kDa light chain, flagellar outer arm from Chlamydomonas reinhardtii (Chlamydomonas smithii).